Consider the following 362-residue polypeptide: Histidinol-phosphate aminotransferase (362 aa).

An N6-(pyridoxal phosphate)lysine modification is found at lysine 218.

This sequence belongs to the class-II pyridoxal-phosphate-dependent aminotransferase family. Histidinol-phosphate aminotransferase subfamily. In terms of assembly, homodimer. Requires pyridoxal 5'-phosphate as cofactor.

The catalysed reaction is L-histidinol phosphate + 2-oxoglutarate = 3-(imidazol-4-yl)-2-oxopropyl phosphate + L-glutamate. It functions in the pathway amino-acid biosynthesis; L-histidine biosynthesis; L-histidine from 5-phospho-alpha-D-ribose 1-diphosphate: step 7/9. The sequence is that of Histidinol-phosphate aminotransferase from Xanthomonas campestris pv. campestris (strain B100).